The primary structure comprises 706 residues: Transmembrane 9 superfamily member 3 (706 aa).

An N-terminal signal peptide occupies residues 1 to 33 (MRVRPKRSVITLMAIVVVMLILRNQFYSSRTRG). Residues 34-290 (HGQEPVISSS…LSDEQSIQFH (257 aa)) are Lumenal-facing. Residues 291–311 (WMSLANSVGIVLSISFITLII) traverse the membrane as a helical segment. At 312–371 (YVRVMYTDKSNSKSPKYMINIEGIETEDDLDDDKYGKYSVYTVAKDWIQNGRPNLFGLKV) the chain is on the cytoplasmic side. The chain crosses the membrane as a helical span at residues 372–392 (LILLVSFGVQFLFTIIGSLTI). The Lumenal portion of the chain corresponds to 393-405 (SCSMNKLHNVRNS). The chain crosses the membrane as a helical span at residues 406 to 426 (VLTMAILFFVLGAFMASFVGT). Residues 427-456 (RLSMVTKTKRTKANYLDDNRYLKDYKKFSP) are Cytoplasmic-facing. The chain crosses the membrane as a helical span at residues 457 to 477 (IFTILCGSSLPGIVMVSTFLL). Residues 478 to 494 (NSIVWAHDSTSALPFKT) are Lumenal-facing. Residues 495–515 (IVFFMSIYFIVCIPLSLFGGI) form a helical membrane-spanning segment. Residues 516–553 (VANNIPLPQYWLSGITKDESNSDGNGLFVPKSRAKFNP) lie on the Cytoplasmic side of the membrane. The chain crosses the membrane as a helical span at residues 554-574 (LVYCGIYLCGIFPLLVIYVEM). Over 575-592 (QYVYKSLWLEKTTFYYFY) the chain is Lumenal. A helical transmembrane segment spans residues 593-613 (GFLFLSIILLCVLTMEISIIG). Topologically, residues 614-637 (SYLLMRFCFEDKVVRNNWRWKCFE) are cytoplasmic. The helical transmembrane segment at 638 to 658 (MGFSGGVYMELYSLYYIFAVL) threads the bilayer. Residues 659–665 (NIHGFSS) lie on the Lumenal side of the membrane. A helical transmembrane segment spans residues 666–686 (ILISICYSLIFNVMCSLGLGA). Residues 687–706 (LSYLTASWFINKIYHQKVNL) are Cytoplasmic-facing.

The protein belongs to the nonaspanin (TM9SF) (TC 9.A.2) family.

It is found in the golgi apparatus membrane. Functionally, with EMP70 and TMN2, plays a critical role in the late stages of a nutrient-controlled pathway notably regulating FLO11 gene expression. Acts downstream of RAS2 and TOR. Essential for cell adhesion and filamentous growth. May play a role as effector of cellular copper homeostasis. The chain is Transmembrane 9 superfamily member 3 (TMN3) from Saccharomyces cerevisiae (strain ATCC 204508 / S288c) (Baker's yeast).